The sequence spans 447 residues: Mannose/glucose-specific lectin (447 aa).

3 consecutive Jacalin-type lectin domains span residues 5-148, 153-294, and 300-443; these read MISV…FVKP, TISF…YVKP, and SISI…FVKP.

Belongs to the jacalin lectin family. In terms of tissue distribution, expressed in seeds (at protein level).

Hemagglutinating activity is slightly inhibited by alpha-methyl-D-mannopyranoside. Functionally, D-mannose/D-glucose-binding lectin that also binds derivatives N-acetyl-D-glucosamine and alpha-methyl-D-mannopyranoside. Does not bind D-galactose, L-Rhamnose, D-fructose, lactose or glycoproteins fetiun and mucin. Shows agglutinating activity towards human and rabbit erythrocytes. Also displays antimicrobial activity against L.infantum. The sequence is that of Mannose/glucose-specific lectin from Parkia pendula (Inga pendula).